The primary structure comprises 424 residues: Histidine--tRNA ligase (424 aa).

It belongs to the class-II aminoacyl-tRNA synthetase family. Homodimer.

It is found in the cytoplasm. The enzyme catalyses tRNA(His) + L-histidine + ATP = L-histidyl-tRNA(His) + AMP + diphosphate + H(+). The polypeptide is Histidine--tRNA ligase (Pectobacterium carotovorum subsp. carotovorum (strain PC1)).